Here is a 417-residue protein sequence, read N- to C-terminus: Serine hydroxymethyltransferase 3 (417 aa).

Residues Leu121 and 125 to 127 (GHL) each bind (6S)-5,6,7,8-tetrahydrofolate. Lys230 is subject to N6-(pyridoxal phosphate)lysine. 355–357 (SPF) is a binding site for (6S)-5,6,7,8-tetrahydrofolate.

The protein belongs to the SHMT family. In terms of assembly, homodimer. The cofactor is pyridoxal 5'-phosphate.

Its subcellular location is the cytoplasm. The enzyme catalyses (6R)-5,10-methylene-5,6,7,8-tetrahydrofolate + glycine + H2O = (6S)-5,6,7,8-tetrahydrofolate + L-serine. The protein operates within one-carbon metabolism; tetrahydrofolate interconversion. It participates in amino-acid biosynthesis; glycine biosynthesis; glycine from L-serine: step 1/1. Functionally, catalyzes the reversible interconversion of serine and glycine with tetrahydrofolate (THF) serving as the one-carbon carrier. This reaction serves as the major source of one-carbon groups required for the biosynthesis of purines, thymidylate, methionine, and other important biomolecules. Also exhibits THF-independent aldolase activity toward beta-hydroxyamino acids, producing glycine and aldehydes, via a retro-aldol mechanism. This is Serine hydroxymethyltransferase 3 from Pseudomonas fluorescens (strain Pf0-1).